The sequence spans 1218 residues: MIKNGTCPYWERDDLSECARREYIEFKFPLFILLTGMIYAFCKVFRAFYLRGKNHTNEAPEFEEQGNGNHEYARFSVLRLKSAWESRSFCNVNNRSTFDKFKKFIEGAFIVLQLTIHLYILSSMPMDNKKFFHQGFLVQMFLWILLLVVITLRLISASQSFRWVLACKRDLWAVSFYSYASLFTLSILPLRSVFIGKIKDKIMVKYIISETFIDLALLLLLSTSSIEGTRYSFLVENENKKLPPAPTVFGLLTFSRIDRLIWKAYKHCLGNADIWDLDINNKSIAILANFEMSSKKGRLLPNIICYFKAVFISQLFLAFVSSFLNFVPSLLMPRILSYVNDPKSKSWNLVSLYVSSMLVSKIIATTCRGQGLFLGEKGTMQLRTVLISNIYSKTLRRTILKDSTTSLQKNASTSFEENPDSSEAEPRKKSSRKDNSVNNVMSIDAFKVSEAMNTFYLACEAVFMTVTALMILYSLLGWSAFAGTFALLAMIPLNFWCATFYGNYQADQLILTDKRTSGISEALNSIRVIKLLAWENLFYQKIINVRDGEIRLLKKKATIFFLNHLIWFFGPTLVSAITFSVFIKFQNQTLTPTIAFTALSLFAILRTPMDQIASTVSLLIQSFISLERIQDYLNESETRKYEILEQSNTKFGFEDASMEWEAAETSFKLKNISIDFKLNSLNAIIGPTGSGKSSLLLGLLGELNLLSGKIYVPTVESRDDLEIGKDGMTNSMAYCSQTPWLISGTIKDNVVFGEIFNKQKFDDVMKSCCLDKDIKAMTAGIRTDVGDGGFSLSGGQQQRIALARAIYSSSRYLILDDCLSAVDPETALYIYEECLCGPMMKGRTCIITSHNISLVTKRADWLVILDRGEVKSQGKPSDLIKSNEFLRESINNDSKNTTHNQIDLKRSTTSKKTKNGDPEGGNSQDEVCAEVENFEETKMEGSVKFSAYKWLADYFGGLGVVFVFTSSSILIHGITLSQGFWLRYWLDTGSSGSKSTWLYRIVEGHSNIYFLLTYIIIGLVSSFLTSGKVWIAIISGTNVTKKIFAKLLSSILYAKLRFHNVTPTGRIMNRFSKDMDIIDQQLIPNFEGLSYSVVVCLWIILLIGYVTPQFLLFAIPLCALYYTVCTLYLRASRELKRIDNINISPIHQLFAEAIKGVTTIRALADERRFITQSLVAIDRSNAPFFYLNMATEWITYRVDIIGTLVLFSSSVMIIMKAS.

The Extracellular portion of the chain corresponds to 1 to 29 (MIKNGTCPYWERDDLSECARREYIEFKFP). N-linked (GlcNAc...) asparagine glycosylation occurs at Asn4. A helical membrane pass occupies residues 30–50 (LFILLTGMIYAFCKVFRAFYL). Residues 51-103 (RGKNHTNEAPEFEEQGNGNHEYARFSVLRLKSAWESRSFCNVNNRSTFDKFKK) are Cytoplasmic-facing. The chain crosses the membrane as a helical span at residues 104-124 (FIEGAFIVLQLTIHLYILSSM). Topologically, residues 125 to 130 (PMDNKK) are extracellular. A helical membrane pass occupies residues 131–151 (FFHQGFLVQMFLWILLLVVIT). Topologically, residues 152 to 169 (LRLISASQSFRWVLACKR) are cytoplasmic. Residues 170-190 (DLWAVSFYSYASLFTLSILPL) traverse the membrane as a helical segment. At 191–201 (RSVFIGKIKDK) the chain is on the extracellular side. The chain crosses the membrane as a helical span at residues 202–222 (IMVKYIISETFIDLALLLLLS). The Cytoplasmic segment spans residues 223–302 (TSSIEGTRYS…SSKKGRLLPN (80 aa)). Residues 303-323 (IICYFKAVFISQLFLAFVSSF) traverse the membrane as a helical segment. Residues 311-621 (FISQLFLAFV…IASTVSLLIQ (311 aa)) form the ABC transmembrane type-1 1 domain. Residues 324–351 (LNFVPSLLMPRILSYVNDPKSKSWNLVS) are Extracellular-facing. A helical transmembrane segment spans residues 352–374 (LYVSSMLVSKIIATTCRGQGLFL). Over 375-449 (GEKGTMQLRT…VMSIDAFKVS (75 aa)) the chain is Cytoplasmic. The tract at residues 410-434 (NASTSFEENPDSSEAEPRKKSSRKD) is disordered. Over residues 424–434 (AEPRKKSSRKD) the composition is skewed to basic and acidic residues. The chain crosses the membrane as a helical span at residues 450 to 470 (EAMNTFYLACEAVFMTVTALM). Over 471–481 (ILYSLLGWSAF) the chain is Extracellular. The chain crosses the membrane as a helical span at residues 482 to 504 (AGTFALLAMIPLNFWCATFYGNY). The Cytoplasmic segment spans residues 505-558 (QADQLILTDKRTSGISEALNSIRVIKLLAWENLFYQKIINVRDGEIRLLKKKAT). The chain crosses the membrane as a helical span at residues 559–579 (IFFLNHLIWFFGPTLVSAITF). At 580 to 584 (SVFIK) the chain is on the extracellular side. A helical transmembrane segment spans residues 585 to 605 (FQNQTLTPTIAFTALSLFAIL). Residues 606–953 (RTPMDQIAST…KFSAYKWLAD (348 aa)) are Cytoplasmic-facing. Positions 651–892 (FGFEDASMEW…NEFLRESINN (242 aa)) constitute an ABC transporter domain. 686–693 (GPTGSGKS) contributes to the ATP binding site. Polar residues predominate over residues 892–901 (NDSKNTTHNQ). The interval 892–926 (NDSKNTTHNQIDLKRSTTSKKTKNGDPEGGNSQDE) is disordered. Residues 954–974 (YFGGLGVVFVFTSSSILIHGI) traverse the membrane as a helical segment. The ABC transmembrane type-1 2 domain occupies 961-1218 (VFVFTSSSIL…SSVMIIMKAS (258 aa)). Topologically, residues 975–1013 (TLSQGFWLRYWLDTGSSGSKSTWLYRIVEGHSNIYFLLT) are extracellular. Residues 1014-1034 (YIIIGLVSSFLTSGKVWIAII) form a helical membrane-spanning segment. Topologically, residues 1035–1082 (SGTNVTKKIFAKLLSSILYAKLRFHNVTPTGRIMNRFSKDMDIIDQQL) are cytoplasmic. A helical transmembrane segment spans residues 1083-1105 (IPNFEGLSYSVVVCLWIILLIGY). At 1106 to 1109 (VTPQ) the chain is on the extracellular side. A helical membrane pass occupies residues 1110-1132 (FLLFAIPLCALYYTVCTLYLRAS). Topologically, residues 1133 to 1197 (RELKRIDNIN…NMATEWITYR (65 aa)) are cytoplasmic. The helical transmembrane segment at 1198-1218 (VDIIGTLVLFSSSVMIIMKAS) threads the bilayer.

This sequence belongs to the ABC transporter superfamily. ABCC family. Conjugate transporter (TC 3.A.1.208) subfamily.

The protein resides in the membrane. The sequence is that of ABC transporter NFT1 (NFT1) from Saccharomyces cerevisiae (strain ATCC 204508 / S288c) (Baker's yeast).